The chain runs to 89 residues: Small ribosomal subunit protein uS17 (89 aa).

The protein belongs to the universal ribosomal protein uS17 family. Part of the 30S ribosomal subunit.

Its function is as follows. One of the primary rRNA binding proteins, it binds specifically to the 5'-end of 16S ribosomal RNA. The protein is Small ribosomal subunit protein uS17 of Coxiella burnetii (strain RSA 331 / Henzerling II).